A 234-amino-acid chain; its full sequence is Cyclo(L-leucyl-L-leucyl) synthase (234 aa).

Ser28 functions as the Nucleophile in the catalytic mechanism. Substrate contacts are provided by residues 171–175 (YVLAE), Tyr195, and 200–201 (EL).

The protein belongs to the CDPS family.

It carries out the reaction 2 L-leucyl-tRNA(Leu) = cyclo(L-leucyl-L-leucyl) + 2 tRNA(Leu) + 2 H(+). Functionally, it uses activated amino acids in the form of aminoacyl-tRNAs (aa-tRNAs) as substrates to catalyze the ATP-independent formation of cyclodipeptides which are intermediates in diketopiperazine (DKP) biosynthetic pathways. Catalyzes the formation of cyclo(L-Leu-L-Leu) (cLL) from L-leucyl-tRNA(Leu). Can incorporate various nonpolar residues, such as L-phenylalanine, L-leucine and L-methionine, into cyclodipeptides. This chain is Cyclo(L-leucyl-L-leucyl) synthase, found in Staphylococcus haemolyticus (strain JCSC1435).